The following is a 142-amino-acid chain: Small ribosomal subunit protein uS12 (142 aa).

This sequence belongs to the universal ribosomal protein uS12 family. In terms of assembly, part of the 30S ribosomal subunit.

With S4 and S5 plays an important role in translational accuracy. Located at the interface of the 30S and 50S subunits. This is Small ribosomal subunit protein uS12 from Methanocorpusculum labreanum (strain ATCC 43576 / DSM 4855 / Z).